A 446-amino-acid polypeptide reads, in one-letter code: tRNA modification GTPase MnmE (446 aa).

Residues Arg-24, Glu-81, and Lys-120 each coordinate (6S)-5-formyl-5,6,7,8-tetrahydrofolate. A TrmE-type G domain is found at Gly-216–Leu-368. Residue Asn-226 coordinates K(+). Residues Asn-226–Ser-231, Thr-245–Thr-251, and Asp-270–Gly-273 each bind GTP. Ser-230 is a Mg(2+) binding site. The K(+) site is built by Thr-245, Val-247, and Thr-250. Thr-251 contacts Mg(2+). Position 446 (Lys-446) interacts with (6S)-5-formyl-5,6,7,8-tetrahydrofolate.

This sequence belongs to the TRAFAC class TrmE-Era-EngA-EngB-Septin-like GTPase superfamily. TrmE GTPase family. As to quaternary structure, homodimer. Heterotetramer of two MnmE and two MnmG subunits. The cofactor is K(+).

It localises to the cytoplasm. Functionally, exhibits a very high intrinsic GTPase hydrolysis rate. Involved in the addition of a carboxymethylaminomethyl (cmnm) group at the wobble position (U34) of certain tRNAs, forming tRNA-cmnm(5)s(2)U34. The sequence is that of tRNA modification GTPase MnmE from Xanthomonas campestris pv. campestris (strain B100).